The following is a 200-amino-acid chain: Recombination protein RecR (200 aa).

The segment at 58 to 75 (CSNCFCLKISQTSPCNFC) adopts a C4-type zinc-finger fold. One can recognise a Toprim domain in the interval 82-177 (SSLCIVATPK…KISRLALGMP (96 aa)).

This sequence belongs to the RecR family.

In terms of biological role, may play a role in DNA repair. It seems to be involved in an RecBC-independent recombinational process of DNA repair. It may act with RecF and RecO. The sequence is that of Recombination protein RecR from Chlamydia trachomatis serovar D (strain ATCC VR-885 / DSM 19411 / UW-3/Cx).